Here is a 201-residue protein sequence, read N- to C-terminus: Recombination protein RecR (201 aa).

A C4-type zinc finger spans residues 59 to 74; the sequence is CEICGNMDTENICRIC. The Toprim domain occupies 82–177; it reads SIIAIVETVA…KISRLASGIP (96 aa).

This sequence belongs to the RecR family.

Functionally, may play a role in DNA repair. It seems to be involved in an RecBC-independent recombinational process of DNA repair. It may act with RecF and RecO. This chain is Recombination protein RecR, found in Rickettsia peacockii (strain Rustic).